A 142-amino-acid polypeptide reads, in one-letter code: Large ribosomal subunit protein uL16 (142 aa).

Belongs to the universal ribosomal protein uL16 family. As to quaternary structure, part of the 50S ribosomal subunit.

Binds 23S rRNA and is also seen to make contacts with the A and possibly P site tRNAs. In Pseudothermotoga lettingae (strain ATCC BAA-301 / DSM 14385 / NBRC 107922 / TMO) (Thermotoga lettingae), this protein is Large ribosomal subunit protein uL16.